The following is a 501-amino-acid chain: NAD(P)H-quinone oxidoreductase subunit 2, chloroplastic (501 aa).

14 helical membrane passes run 15 to 35, 42 to 62, 82 to 102, 107 to 127, 132 to 152, 167 to 187, 210 to 230, 244 to 264, 278 to 298, 307 to 327, 334 to 354, 378 to 398, 410 to 430, and 466 to 486; these read ILPECVLIFCLISILILDLIL, VFFFISLVSLLLSIFILIFQL, IFRIFIALCSILCIPLSIDFI, LAITEFLIFLLTATIGGMFLC, LITIFVSLECLSLCSYLLSGY, LLIGGTSSSILAYGFSWLYGL, FGSLLALVFIIVGIGFKLSLV, PTPVVAFLSVASKIAGLALLV, WHSLLEISAICSMILGNLVAI, LAYSSISQIGYLMIGLVTGNF, IVYLLFYIFMNLGTFACIILF, FSLALCLLSLGGIPPLSGFFG, GLYFLVFIGLFTSVISIYYYL, and VSIIICVIASIFLGIFMNPII.

The protein belongs to the complex I subunit 2 family. NDH is composed of at least 16 different subunits, 5 of which are encoded in the nucleus.

The protein localises to the plastid. The protein resides in the chloroplast thylakoid membrane. The catalysed reaction is a plastoquinone + NADH + (n+1) H(+)(in) = a plastoquinol + NAD(+) + n H(+)(out). The enzyme catalyses a plastoquinone + NADPH + (n+1) H(+)(in) = a plastoquinol + NADP(+) + n H(+)(out). Functionally, NDH shuttles electrons from NAD(P)H:plastoquinone, via FMN and iron-sulfur (Fe-S) centers, to quinones in the photosynthetic chain and possibly in a chloroplast respiratory chain. The immediate electron acceptor for the enzyme in this species is believed to be plastoquinone. Couples the redox reaction to proton translocation, and thus conserves the redox energy in a proton gradient. This Physcomitrium patens (Spreading-leaved earth moss) protein is NAD(P)H-quinone oxidoreductase subunit 2, chloroplastic.